A 1129-amino-acid chain; its full sequence is Phytochrome A (1129 aa).

A GAF domain is found at 217–399 (SMERLCDTMV…VFAIHVSKEL (183 aa)). Residue Cys322 participates in phytochromobilin binding. PAS domains follow at residues 622-692 (VTSE…LQGK) and 755-826 (DYKA…VNLG). In terms of domain architecture, Histidine kinase spans 906 to 1123 (YLRRQAKNPL…TFIITVELAA (218 aa)).

It belongs to the phytochrome family. As to quaternary structure, homodimer. Contains one covalently linked phytochromobilin chromophore.

Functionally, regulatory photoreceptor which exists in two forms that are reversibly interconvertible by light: the Pr form that absorbs maximally in the red region of the spectrum and the Pfr form that absorbs maximally in the far-red region. Photoconversion of Pr to Pfr induces an array of morphogenic responses, whereas reconversion of Pfr to Pr cancels the induction of those responses. Pfr controls the expression of a number of nuclear genes including those encoding the small subunit of ribulose-bisphosphate carboxylase, chlorophyll A/B binding protein, protochlorophyllide reductase, rRNA, etc. It also controls the expression of its own gene(s) in a negative feedback fashion. The chain is Phytochrome A (PHYA) from Petroselinum crispum (Parsley).